Reading from the N-terminus, the 157-residue chain is 2-C-methyl-D-erythritol 2,4-cyclodiphosphate synthase (157 aa).

Aspartate 8 and histidine 10 together coordinate a divalent metal cation. 4-CDP-2-C-methyl-D-erythritol 2-phosphate contacts are provided by residues 8–10 (DVH) and 34–35 (HS). Histidine 42 lines the a divalent metal cation pocket. Residues 56–58 (DIG), 132–135 (TTNE), and arginine 142 each bind 4-CDP-2-C-methyl-D-erythritol 2-phosphate.

Belongs to the IspF family. Homotrimer. Requires a divalent metal cation as cofactor.

The catalysed reaction is 4-CDP-2-C-methyl-D-erythritol 2-phosphate = 2-C-methyl-D-erythritol 2,4-cyclic diphosphate + CMP. It functions in the pathway isoprenoid biosynthesis; isopentenyl diphosphate biosynthesis via DXP pathway; isopentenyl diphosphate from 1-deoxy-D-xylulose 5-phosphate: step 4/6. Functionally, involved in the biosynthesis of isopentenyl diphosphate (IPP) and dimethylallyl diphosphate (DMAPP), two major building blocks of isoprenoid compounds. Catalyzes the conversion of 4-diphosphocytidyl-2-C-methyl-D-erythritol 2-phosphate (CDP-ME2P) to 2-C-methyl-D-erythritol 2,4-cyclodiphosphate (ME-CPP) with a corresponding release of cytidine 5-monophosphate (CMP). The chain is 2-C-methyl-D-erythritol 2,4-cyclodiphosphate synthase from Chlorobaculum tepidum (strain ATCC 49652 / DSM 12025 / NBRC 103806 / TLS) (Chlorobium tepidum).